A 530-amino-acid chain; its full sequence is Chaperone Ric-8A (530 aa).

Phosphoserine is present on Ser-435. A phosphothreonine mark is found at Thr-440 and Thr-442. 4 positions are modified to phosphoserine: Ser-501, Ser-522, Ser-523, and Ser-527.

The protein belongs to the synembryn family. In terms of assembly, interacts with GDP-bound G alpha proteins GNAI1, GNAO1 and GNAQ, and with GNA13 with lower affinity. Does not interact with G-alpha proteins when they are in complex with subunits beta and gamma. Interacts (via C-terminus) with RGS14; the interaction stimulates the dissociation of the complex between RGS14 and the active GTP-bound form of GNAI1. Interacts with NCS1; interaction is favored in the absence of Ca(2+) and myristoylation of NCS1 is not required. Phosphorylated at Ser-435 and Thr-440 by CK2, stabilizing its interface with G alpha proteins.

The protein resides in the cytoplasm. The protein localises to the cell cortex. Functionally, chaperone that specifically binds and folds nascent G alpha proteins prior to G protein heterotrimer formation, promoting their stability and activity: folds GNAI1, GNAO1, GNA13 and GNAQ. Does not fold G(s) G-alpha proteins GNAS nor GNAL. Also acts as a guanine nucleotide exchange factor (GEF) for G alpha proteins by stimulating exchange of bound GDP for free GTP. Involved in regulation of microtubule pulling forces during mitotic movement of chromosomes by stimulating G(i)-alpha protein (GNAI1), possibly leading to release G(i)-alpha-GTP and NuMA proteins from the NuMA-GPSM2-G(i)-alpha-GDP complex. Also acts as an activator for G(q)-alpha (GNAQ) protein by enhancing the G(q)-coupled receptor-mediated ERK activation. The chain is Chaperone Ric-8A (RIC8A) from Bos taurus (Bovine).